The following is a 503-amino-acid chain: Probable cytosol aminopeptidase (503 aa).

Mn(2+) contacts are provided by K274 and D279. Residue K286 is part of the active site. Residues D297, D356, and E358 each coordinate Mn(2+). Residue R360 is part of the active site.

The protein belongs to the peptidase M17 family. It depends on Mn(2+) as a cofactor.

The protein localises to the cytoplasm. The enzyme catalyses Release of an N-terminal amino acid, Xaa-|-Yaa-, in which Xaa is preferably Leu, but may be other amino acids including Pro although not Arg or Lys, and Yaa may be Pro. Amino acid amides and methyl esters are also readily hydrolyzed, but rates on arylamides are exceedingly low.. It carries out the reaction Release of an N-terminal amino acid, preferentially leucine, but not glutamic or aspartic acids.. In terms of biological role, presumably involved in the processing and regular turnover of intracellular proteins. Catalyzes the removal of unsubstituted N-terminal amino acids from various peptides. This is Probable cytosol aminopeptidase from Burkholderia orbicola (strain MC0-3).